Consider the following 403-residue polypeptide: PP2A regulatory subunit TAP46 (403 aa).

2 disordered regions span residues 158–184 (ERRG…LDDD) and 351–403 (ANSS…TPCG). Acidic residues-rich tracts occupy residues 174–184 (ETEEDDVLDDD) and 366–375 (EDDEEDDDDA). Residues 376 to 391 (AQDKARAWDDWKDDNP) are compositionally biased toward basic and acidic residues.

Belongs to the IGBP1/TAP42 family. Interacts with NPP4 and NPP5, two catalytic subunits (subunit C) of PP2A.

It localises to the cytoplasm. The protein localises to the nucleus. In terms of biological role, involved in the regulation of the TOR signaling pathway. Seems to act as a regulator of PP2A catalytic activity. The protein is PP2A regulatory subunit TAP46 of Nicotiana benthamiana.